The chain runs to 648 residues: Adhesion G-protein coupled receptor G1 (648 aa).

Positions 1–24 are cleaved as a signal peptide; it reads MKQNPAKTARMWIIICLLFVLGQA. Over 25–370 the chain is Extracellular; that stretch reads TDNDRDFKMC…STVRHLKALT (346 aa). C34 and C96 are disulfide-bonded. N-linked (GlcNAc...) asparagine glycans are attached at residues N62, N91, N114, N146, N222, N262, and N286. The cysteines at positions 127 and 176 are disulfide-linked. Residues 214–361 enclose the GAIN-B domain; that stretch reads MDEEFTGHNF…AILVQVEQKS (148 aa). 2 cysteine pairs are disulfide-bonded: C313/C343 and C331/C345. The GPS stretch occupies residues 313–361; it reads CVSWDTKQDNEVNWKDDGCDTVKINEEQTECHCNHLTYFAILVQVEQKS. The tract at residues 349–361 is stachel; that stretch reads TYFAILVQVEQKS. A helical membrane pass occupies residues 371 to 391; sequence FITAVGCAVSLVSCLVLFYWL. Residues 392–408 lie on the Cytoplasmic side of the membrane; that stretch reads CKRRRGKKNQISLVHRG. A helical membrane pass occupies residues 409–429; the sequence is LVVAIFLLCLFFILTGILANV. Residues 430–443 are Extracellular-facing; sequence ANETVCQLTGSLLH. The N-linked (GlcNAc...) asparagine glycan is linked to N431. The chain crosses the membrane as a helical span at residues 444 to 464; the sequence is YGLLSTLCWMAMEVFHTFLLV. Residues 465 to 471 lie on the Cytoplasmic side of the membrane; it reads RKVFNSP. Residues 472–492 traverse the membrane as a helical segment; sequence LPIWIFYLMGFGFPFLLVSIL. Topologically, residues 493–530 are extracellular; the sequence is LSVGDIYGERKIKPSDDVNNPYRMCWMTEGDKSQLAHY. Residues 531-551 traverse the membrane as a helical segment; sequence IINIGLLAVVVSSGLVMLFLV. The Cytoplasmic portion of the chain corresponds to 552–563; it reads VREIRNRPDWKK. Residues 564–586 form a helical membrane-spanning segment; that stretch reads IHVAFLSIWGLTCLYGTTWALGF. Over 587 to 595 the chain is Extracellular; the sequence is LDFGPFSEV. Residues 596–618 form a helical membrane-spanning segment; sequence TLFLFCIINSLQGFFLMLRYYAL. At 619–648 the chain is on the cytoplasmic side; sequence ERMKKKDVSSSDGSSSGSSKQHMLQTNEKS.

This sequence belongs to the G-protein coupled receptor 2 family. LN-TM7 subfamily. In terms of assembly, heterodimer of 2 chains generated by proteolytic processing; the large extracellular N-terminal fragment (ADGRG1 NT) and the membrane-bound C-terminal fragment (ADGRG1-CT) predominantly remain associated and non-covalently linked. Autoproteolytically cleaved into 2 fragments; the large extracellular N-terminal fragment (ADGRG1 NT) and the membrane-bound C-terminal fragment (ADGRG1 CT) predominantly remain associated and non-covalently linked.

Its subcellular location is the cell membrane. Its activity is regulated as follows. Forms a heterodimer of 2 chains generated by proteolytic processing that remain associated through non-covalent interactions mediated by the GAIN-B domain. In the inactivated receptor, the Stachel sequence (also named stalk) is embedded in the GAIN-B domain, where it adopts a beta-strand conformation. On activation, the Stachel moves into the 7 transmembrane region and adopts a twisted hook-shaped configuration that forms contacts within the receptor, leading to coupling of a G-alpha protein, which activates signaling. The cleaved GAIN-B and N-terminal domains can then dissociate from the rest of the receptor. Functionally, adhesion G-protein coupled receptor (aGPCR), which is involved in oligodendrocyte development and maintenance of peripheral myelin. Ligand binding causes a conformation change that triggers signaling via guanine nucleotide-binding proteins (G proteins) and modulates the activity of downstream effectors, such as RhoA pathway. Adgrg1 is coupled to G(12) and/or G(13) G proteins (gna12 and gna13, respectively) and mediates the activation Rho small GTPases. Adgrg1-dependent RhoA signaling promotes timely radial sorting of axons. Required to establish proper myelin thickness and facilitate organization of the myelin sheath in the mature peripheral nervous system. This chain is Adhesion G-protein coupled receptor G1, found in Danio rerio (Zebrafish).